The sequence spans 61 residues: Large ribosomal subunit protein eL37 (61 aa).

Residues Cys-20, Cys-23, Cys-35, and Cys-38 each contribute to the Zn(2+) site. The segment at 20–38 adopts a C4-type zinc-finger fold; the sequence is CPRCGRHSYNIVKGYCAAC.

Belongs to the eukaryotic ribosomal protein eL37 family. The cofactor is Zn(2+).

Its function is as follows. Binds to the 23S rRNA. This chain is Large ribosomal subunit protein eL37, found in Caldivirga maquilingensis (strain ATCC 700844 / DSM 13496 / JCM 10307 / IC-167).